The primary structure comprises 173 residues: dCTP deaminase, dUMP-forming (173 aa).

Residues 93–98 (RSSTGR), D111, 119–121 (TLE), Q138, and Y151 each bind dCTP. E121 serves as the catalytic Proton donor/acceptor.

Belongs to the dCTP deaminase family. In terms of assembly, homotrimer.

It carries out the reaction dCTP + 2 H2O = dUMP + NH4(+) + diphosphate. It functions in the pathway pyrimidine metabolism; dUMP biosynthesis; dUMP from dCTP: step 1/1. Its function is as follows. Bifunctional enzyme that catalyzes both the deamination of dCTP to dUTP and the hydrolysis of dUTP to dUMP without releasing the toxic dUTP intermediate. The chain is dCTP deaminase, dUMP-forming from Clostridium beijerinckii (strain ATCC 51743 / NCIMB 8052) (Clostridium acetobutylicum).